A 215-amino-acid chain; its full sequence is Autophagy-related protein 101 (215 aa).

A disordered region spans residues 124-147 (PVGKSHHSKLVMDPGEASEERSSR).

This sequence belongs to the ATG101 family. As to quaternary structure, interacts with ATG11 and ATG13A.

It localises to the cytoplasmic vesicle. Its subcellular location is the autophagosome. Its function is as follows. Accessory protein involved in autophagy. Acts as a scaffold protein of the ATG1-ATG13 complex for faithful delivery of autophagic vesicles to the vacuole. Required for selective mitophagy. The sequence is that of Autophagy-related protein 101 from Arabidopsis thaliana (Mouse-ear cress).